Here is a 165-residue protein sequence, read N- to C-terminus: Protein YELLOW LEAF 1, choloroplastic (165 aa).

A chloroplast-targeting transit peptide spans 1-51 (MPPLATMSSPGSLLLLTPAVYQGIGRNRGGQSQEGQSISSSRSLKTKLSVS). The interval 71–118 (TQTARRKSFSGPTSPPSGSVKEKVRSPKLDDGGTGFPPFRFGGGGGGG) is disordered. Positions 79 to 89 (FSGPTSPPSGS) are enriched in low complexity. Over residues 90–101 (VKEKVRSPKLDD) the composition is skewed to basic and acidic residues.

As to quaternary structure, interacts with atpB. In terms of tissue distribution, highly expressed in leaves. Expressed in leaf sheaths. Expressed at low levels in stems.

The protein resides in the plastid. It is found in the chloroplast. In terms of biological role, required for photosynthetic protein complex assembly in chloroplast thylakoid membranes during leaf development. Maintains the abundance of the core protein complex PsaA-PsaB of photosystem I (PSI) in the thylakoid membrane. May play a role in the efficient biogenesis of the chloroplast ATP synthase complex, possibly by interacting with the beta subunit atpB. The chain is Protein YELLOW LEAF 1, choloroplastic from Oryza sativa subsp. japonica (Rice).